The primary structure comprises 274 residues: Large ribosomal subunit protein uL2 (274 aa).

The interval 223 to 274 is disordered; it reads GIAMNPVDHPHGGGEGRSKGNHPVTPWGMPTKGYKTRKKKQSDKYIISRRKK. A compositionally biased stretch (basic and acidic residues) spans 230–240; that stretch reads DHPHGGGEGRS. The segment covering 256 to 274 has biased composition (basic residues); the sequence is YKTRKKKQSDKYIISRRKK.

Belongs to the universal ribosomal protein uL2 family. Part of the 50S ribosomal subunit. Forms a bridge to the 30S subunit in the 70S ribosome.

One of the primary rRNA binding proteins. Required for association of the 30S and 50S subunits to form the 70S ribosome, for tRNA binding and peptide bond formation. It has been suggested to have peptidyltransferase activity; this is somewhat controversial. Makes several contacts with the 16S rRNA in the 70S ribosome. This is Large ribosomal subunit protein uL2 from Nautilia profundicola (strain ATCC BAA-1463 / DSM 18972 / AmH).